Here is a 576-residue protein sequence, read N- to C-terminus: Proline--tRNA ligase (576 aa).

It belongs to the class-II aminoacyl-tRNA synthetase family. ProS type 1 subfamily. As to quaternary structure, homodimer.

The protein resides in the cytoplasm. It carries out the reaction tRNA(Pro) + L-proline + ATP = L-prolyl-tRNA(Pro) + AMP + diphosphate. Functionally, catalyzes the attachment of proline to tRNA(Pro) in a two-step reaction: proline is first activated by ATP to form Pro-AMP and then transferred to the acceptor end of tRNA(Pro). As ProRS can inadvertently accommodate and process non-cognate amino acids such as alanine and cysteine, to avoid such errors it has two additional distinct editing activities against alanine. One activity is designated as 'pretransfer' editing and involves the tRNA(Pro)-independent hydrolysis of activated Ala-AMP. The other activity is designated 'posttransfer' editing and involves deacylation of mischarged Ala-tRNA(Pro). The misacylated Cys-tRNA(Pro) is not edited by ProRS. This is Proline--tRNA ligase from Finegoldia magna (strain ATCC 29328 / DSM 20472 / WAL 2508) (Peptostreptococcus magnus).